A 79-amino-acid chain; its full sequence is MDIKSEVLKIIDELFMEDVSDMMDEDLFDAGVLDSMGTVELIVELENHFDITVPVSEFGRDDWNTANKIIEGITELRNA.

One can recognise a Carrier domain in the interval 1–77 (MDIKSEVLKI…KIIEGITELR (77 aa)). Residue Ser-35 is modified to O-(pantetheine 4'-phosphoryl)serine.

This sequence belongs to the DltC family. Post-translationally, 4'-phosphopantetheine is transferred from CoA to a specific serine of apo-DCP.

The protein localises to the cytoplasm. Its pathway is cell wall biogenesis; lipoteichoic acid biosynthesis. Carrier protein involved in the D-alanylation of lipoteichoic acid (LTA). The loading of thioester-linked D-alanine onto DltC is catalyzed by D-alanine--D-alanyl carrier protein ligase DltA. The DltC-carried D-alanyl group is further transferred to cell membrane phosphatidylglycerol (PG) by forming an ester bond, probably catalyzed by DltD. D-alanylation of LTA plays an important role in modulating the properties of the cell wall in Gram-positive bacteria, influencing the net charge of the cell wall. The protein is D-alanyl carrier protein of Streptococcus mutans serotype c (strain ATCC 700610 / UA159).